A 262-amino-acid polypeptide reads, in one-letter code: Nitrilase (262 aa).

Residues 2–237 (VKVAYVQMNP…EEVGVAEIDL (236 aa)) enclose the CN hydrolase domain. Catalysis depends on glutamate 42, which acts as the Proton acceptor. The active-site Proton donor is the lysine 113. Catalysis depends on cysteine 146, which acts as the Nucleophile. Position 173 to 174 (173 to 174 (VM)) interacts with substrate.

The protein belongs to the carbon-nitrogen hydrolase superfamily. In terms of assembly, homodimer.

It carries out the reaction a nitrile + 2 H2O = a carboxylate + NH4(+). With respect to regulation, enzymatic activity is inhibited in the presence of acetone, methanol and metal ions such as Ag(2+) and Hg(2+). Is also inhibited by various thiol reagents such as DTNB, p-chloromercuribenzoate, p-hydroxymercuribenzoate, iodacetamide and iodacetate. EDTA has no influence on activity. Functionally, nitrilase that hydrolyzes preferentially aliphatic nitriles like malononitrile and fumaronitrile in vitro. These dinitriles are converted to the corresponding monoacid mononitriles, showing the enzyme is regioselective. Cannot hydrolyze compounds with a nitrile group bound to an aromatic ring or amino acid. Its biological role is unknown. The chain is Nitrilase from Pyrococcus abyssi (strain GE5 / Orsay).